The chain runs to 278 residues: Short-chain dehydrogenase/reductase eupG (278 aa).

Residues Leu-19, Asp-71, and Asn-98 each coordinate NADP(+). Residue Ser-155 is the Proton donor of the active site. NADP(+) contacts are provided by Tyr-188, Lys-192, and Thr-223. Tyr-188 (proton acceptor) is an active-site residue. Catalysis depends on Lys-192, which acts as the Lowers pKa of active site Tyr.

Belongs to the short-chain dehydrogenases/reductases (SDR) family.

Its pathway is secondary metabolite biosynthesis; terpenoid biosynthesis. Functionally, short-chain dehydrogenase/reductase; part of the gene cluster that mediates the biosynthesis of eupenifeldin, a bistropolone meroterpenoid that acts as an antitumor agent. The first step of eupenifeldin biosynthesis is the biosynthesis of 3-methylorcinaldehyde performed by the non-reducing polyketide synthase eupA. Oxidative dearomatization of 3-methylorcinaldehyde likely catalyzed by the FAD-dependent monooxygenase eupB is followed by oxidative ring expansion by the 2-oxoglutarate-dependent dioxygenase eupC to provide the first tropolone metabolite, tropolone stipitaldehyde. In parallel, generation of sesquiterpene alpha-humulene from farnesylpyrophosphate (FPP) is catalyzed by the terpene cyclase eupE. The cytochrome P450 monooxygenase eupD then hydroxylates humulene to humulenol. The putative Diels-Alderase eupF probably catalyzes the formation of the tropolone-humulene skeleton by linking humulenol and the polyketide moiety. The short-chain dehydrogenase/reductase eupG and the flavin-dependent monooxygenase eupH are also essential for eupenifeldin biosynthesis and are likely the additional decorating enzymes of the tropolone-humulene skeleton to produce final eupenifeldin or derivatives. The polypeptide is Short-chain dehydrogenase/reductase eupG (Phoma sp).